The primary structure comprises 211 residues: Lysozyme g (211 aa).

The signal sequence occupies residues 1-26 (MLGKNDPMCLVLVLLGLTALLGICQG). Disulfide bonds link Cys30–Cys86 and Cys44–Cys55. Residues Glu99 and Asp112 contribute to the active site.

It belongs to the glycosyl hydrolase 23 family. In terms of tissue distribution, granulocyte compartment of myelomonocytic cells.

Its subcellular location is the secreted. It catalyses the reaction Hydrolysis of (1-&gt;4)-beta-linkages between N-acetylmuramic acid and N-acetyl-D-glucosamine residues in a peptidoglycan and between N-acetyl-D-glucosamine residues in chitodextrins.. The sequence is that of Lysozyme g from Gallus gallus (Chicken).